Here is a 557-residue protein sequence, read N- to C-terminus: DNA ligase B (557 aa).

Lys-125 serves as the catalytic N6-AMP-lysine intermediate.

The protein belongs to the NAD-dependent DNA ligase family. LigB subfamily.

It catalyses the reaction NAD(+) + (deoxyribonucleotide)n-3'-hydroxyl + 5'-phospho-(deoxyribonucleotide)m = (deoxyribonucleotide)n+m + AMP + beta-nicotinamide D-nucleotide.. Catalyzes the formation of phosphodiester linkages between 5'-phosphoryl and 3'-hydroxyl groups in double-stranded DNA using NAD as a coenzyme and as the energy source for the reaction. The chain is DNA ligase B from Pseudomonas entomophila (strain L48).